We begin with the raw amino-acid sequence, 358 residues long: Heme A synthase (358 aa).

Helical transmembrane passes span 22–42 (IQVW…VGGA), 107–127 (VLGR…WAIK), 133–153 (VLLQ…VGWW), 172–192 (LAFH…LSQG), 208–228 (FAGW…LVAG), 269–289 (FVHR…AFYV), 302–322 (AFFI…TLLQ), and 324–344 (VPIS…CFSV). His-271 is a heme binding site. Position 332 (His-332) interacts with heme.

Belongs to the COX15/CtaA family. Type 2 subfamily. In terms of assembly, interacts with CtaB. Heme b serves as cofactor.

The protein localises to the cell membrane. It carries out the reaction Fe(II)-heme o + 2 A + H2O = Fe(II)-heme a + 2 AH2. It functions in the pathway porphyrin-containing compound metabolism; heme A biosynthesis; heme A from heme O: step 1/1. In terms of biological role, catalyzes the conversion of heme O to heme A by two successive hydroxylations of the methyl group at C8. The first hydroxylation forms heme I, the second hydroxylation results in an unstable dihydroxymethyl group, which spontaneously dehydrates, resulting in the formyl group of heme A. This is Heme A synthase from Bartonella henselae (strain ATCC 49882 / DSM 28221 / CCUG 30454 / Houston 1) (Rochalimaea henselae).